The sequence spans 255 residues: uncharacterized protein (255 aa).

Residues 1-10 (MSDSIHRRKV) show a composition bias toward basic residues. A disordered region spans residues 1-78 (MSDSIHRRKV…SPMRGLPMEE (78 aa)). Over residues 44–61 (VFERSFSEPSLNRHRDGQ) the composition is skewed to basic and acidic residues.

This is an uncharacterized protein from Arabidopsis thaliana (Mouse-ear cress).